The following is a 228-amino-acid chain: Ferric nitrobindin-like protein (228 aa).

Positions 1 to 21 (MTSDEVRDGAGSPADSSKGNK) are disordered. A GXWXGXG motif is present at residues 75–81 (GVWRGEG).

Belongs to the nitrobindin family.

The sequence is that of Ferric nitrobindin-like protein from Mycobacterium leprae (strain TN).